A 454-amino-acid polypeptide reads, in one-letter code: Natural cytotoxicity triggering receptor 3 ligand 1 (454 aa).

The N-terminal stretch at 1 to 24 is a signal peptide; the sequence is MTWRAAASTCAALLILLWALTTEG. The Extracellular portion of the chain corresponds to 25–262; sequence DLKVEMMAGG…SETEKTDNFS (238 aa). The 112-residue stretch at 27–138 folds into the Ig-like V-type domain; sequence KVEMMAGGTQ…LKAQGTVQLE (112 aa). N-linked (GlcNAc...) asparagine glycans are attached at residues Asn-43 and Asn-57. Cys-48 and Cys-122 are joined by a disulfide. Interaction with NCR3 stretches follow at residues 59–62 and 127–130; these read TSMG and TPLK. The Ig-like C1-type domain maps to 143-244; it reads PASRLLLDQV…LHTPLRSNFT (102 aa). Cys-163 and Cys-228 are oxidised to a cystine. N-linked (GlcNAc...) asparagine glycans are attached at residues Asn-174, Asn-208, Asn-216, Asn-242, and Asn-260. Residues 263-283 form a helical membrane-spanning segment; the sequence is IHWWPISFIGVGLVLLIVLIP. Over 284–454 the chain is Cytoplasmic; the sequence is WKKICNKSSS…QPPTLLLPLQ (171 aa). Positions 291–429 are retroviral-Gag-like; that stretch reads SSSAYTPLKC…APILPVSPIW (139 aa). The tract at residues 395–454 is disordered; it reads GKSIDDNSTKSEKQTPREHSDAVPDAPILPVSPIWEPPPATTSTTPVLSSQPPTLLLPLQ. Residues 397–416 show a composition bias toward basic and acidic residues; sequence SIDDNSTKSEKQTPREHSDA. A compositionally biased stretch (low complexity) spans 435–454; that stretch reads TTSTTPVLSSQPPTLLLPLQ.

Monomer. Interacts specifically with NCR3, but not with other natural killer cell-activating receptors, including NCR1, NCR2 and KLRK1. Not detected in any normal tissue tested. Expressed at the surface of several tumor cell lines including T and B-lymphomas, myeloid leukemias, melanomas, carcinomas and large T SV40 antigen-transformed cells (at protein level).

The protein resides in the cell membrane. Triggers NCR3-dependent natural killer cell activation. The polypeptide is Natural cytotoxicity triggering receptor 3 ligand 1 (NCR3LG1) (Homo sapiens (Human)).